Reading from the N-terminus, the 476-residue chain is Cytochrome P450 monooxygenase ppzE (476 aa).

Position 452 (C452) interacts with heme.

This sequence belongs to the cytochrome P450 family. Requires heme as cofactor.

Its pathway is secondary metabolite biosynthesis. Functionally, cytochrome P450 monooxygenase; part of the gene cluster that mediates the biosynthesis of pyrrolopyrazines, secondary metabolites showing insecticidal activity. The role of ppzE within the pathway has still to be determined. The single multifunctional NRPS ppzA is sufficient to produce peramine via condensation of 1-pyrroline-5-carboxylate and arginine, N-methylation of the alpha-amino group of arginine and reduction of the thioester and the cyclization to form an iminium ion resulting in release from the peptide synthetase. Deprotonation of this intermediate and oxidation of the pyrroline ring would give rise to peramine. In Epichloe species that produce only peramine, the peramine synthetase gene is not localized in a gene cluster, in contrast to Metarhizium species that contain additional pyrrolopyrazine biosynthesis genes. The 2-oxoglutarate-Fe(II) type oxidoreductase ppzC hydroxylates peramine to yield the newly identified compound 8-hydroxyperamine whereas ppzD converts L-proline into trans-4-hydroxy-L-proline, a precursor of peramine biosynthesis. The sequence is that of Cytochrome P450 monooxygenase ppzE from Metarhizium majus (strain ARSEF 297).